A 212-amino-acid polypeptide reads, in one-letter code: Glutathione S-transferase P 1 (212 aa).

Residues 2 to 83 (PGYVLTYFPV…YLGNKHGLTG (82 aa)) form the GST N-terminal domain. Residues Y8, R14, W39, K47, 54–55 (QL), and 67–68 (QS) each bind glutathione. The region spanning 85–206 (NDEERGHIDM…KSDARNKRPI (122 aa)) is the GST C-terminal domain.

This sequence belongs to the GST superfamily. Pi family. In terms of assembly, homodimer. In terms of tissue distribution, expressed only in embryos. Not expressed in liver, lung, heart, kidney and ovary.

Its subcellular location is the cytoplasm. The protein localises to the mitochondrion. It localises to the nucleus. It carries out the reaction RX + glutathione = an S-substituted glutathione + a halide anion + H(+). In terms of biological role, conjugation of reduced glutathione to a wide number of exogenous and endogenous hydrophobic electrophiles. Highly active towards 1-chloro-2,4-dinitrobenzene and organic isothiocyanates, but shows no detectable activity towards 1,2-dichloro-4-nitrobenzene, p-nitrobenzylchloride, trans-4-phenyl-3-buten-2-one (tPBO) and ethacrynic acid. May be associated with cellular proliferation. This is Glutathione S-transferase P 1 (gstp1) from Xenopus laevis (African clawed frog).